A 1030-amino-acid polypeptide reads, in one-letter code: Halotolerance protein 9 (1030 aa).

The segment at residues 136 to 166 is a DNA-binding region (zn(2)-C6 fungal-type); sequence CDHCRKRKIRCDEVDQQTKKCSNCIKFQLPC. Residues 185–208 form a disordered region; it reads HHATPGESLQTSNSISNPVASSSV. Residues 196-208 are compositionally biased toward low complexity; sequence SNSISNPVASSSV. Ser221 and Ser937 each carry phosphoserine.

The protein localises to the cytoplasm. It is found in the nucleus. Functionally, putative transcription factor involved in halotolerance. This Saccharomyces cerevisiae (strain ATCC 204508 / S288c) (Baker's yeast) protein is Halotolerance protein 9 (HAL9).